The primary structure comprises 361 residues: Porphobilinogen deaminase (361 aa).

Position 2 is an N-acetylserine (S2). S69 bears the Phosphoserine mark. K74 is modified (N6-acetyllysine). S147 is subject to Phosphoserine. S-(dipyrrolylmethanemethyl)cysteine is present on C261.

Belongs to the HMBS family. Monomer. Dipyrromethane serves as cofactor.

The protein resides in the cytoplasm. It is found in the cytosol. The catalysed reaction is 4 porphobilinogen + H2O = hydroxymethylbilane + 4 NH4(+). The protein operates within porphyrin-containing compound metabolism; protoporphyrin-IX biosynthesis; coproporphyrinogen-III from 5-aminolevulinate: step 2/4. Functionally, as part of the heme biosynthetic pathway, catalyzes the sequential polymerization of four molecules of porphobilinogen to form hydroxymethylbilane, also known as preuroporphyrinogen. Catalysis begins with the assembly of the dipyrromethane cofactor by the apoenzyme from two molecules of porphobilinogen or from preuroporphyrinogen. The covalently linked cofactor acts as a primer, around which the tetrapyrrole product is assembled. In the last step of catalysis, the product, preuroporphyrinogen, is released, leaving the cofactor bound to the holodeaminase intact. In Bos taurus (Bovine), this protein is Porphobilinogen deaminase (HMBS).